The sequence spans 131 residues: Large ribosomal subunit protein bL19 (131 aa).

Positions 112-131 (KSARIAERAGGPKASASTEA) are disordered.

This sequence belongs to the bacterial ribosomal protein bL19 family.

Functionally, this protein is located at the 30S-50S ribosomal subunit interface and may play a role in the structure and function of the aminoacyl-tRNA binding site. The sequence is that of Large ribosomal subunit protein bL19 from Caulobacter vibrioides (strain ATCC 19089 / CIP 103742 / CB 15) (Caulobacter crescentus).